A 329-amino-acid polypeptide reads, in one-letter code: uncharacterized protein (329 aa).

2 coiled-coil regions span residues 57 to 119 (KKEE…LQEV) and 224 to 250 (AQRQ…LGNV).

This is an uncharacterized protein from Macaca fascicularis (Crab-eating macaque).